Here is a 327-residue protein sequence, read N- to C-terminus: Type II methyltransferase M.HhaI (327 aa).

Residues 12–325 (LRFIDLFAGL…YNIGSSLNFK (314 aa)) form the SAM-dependent MTase C5-type domain. C81 is an active-site residue.

It belongs to the class I-like SAM-binding methyltransferase superfamily. C5-methyltransferase family. Monomer.

The catalysed reaction is a 2'-deoxycytidine in DNA + S-adenosyl-L-methionine = a 5-methyl-2'-deoxycytidine in DNA + S-adenosyl-L-homocysteine + H(+). Functionally, a methylase, recognizes the double-stranded sequence 5'-GCGC-3', methylates C-2 on both strands, and protects the DNA from cleavage by the HhaI endonuclease. This chain is Type II methyltransferase M.HhaI (hhaIM), found in Haemophilus parahaemolyticus.